Here is a 444-residue protein sequence, read N- to C-terminus: CBL-interacting serine/threonine-protein kinase 1 (444 aa).

The region spanning Tyr20–Phe275 is the Protein kinase domain. Residues Leu26 to Val34 and Lys49 each bind ATP. The active-site Proton acceptor is the Asp143. Residues Asp161–Glu190 are activation loop. Ser165 is modified (phosphoserine). At Thr179 the chain carries Phosphothreonine. One can recognise an NAF domain in the interval Asp313–Glu337. The interval Glu343 to Val372 is PPI.

Belongs to the protein kinase superfamily. CAMK Ser/Thr protein kinase family. SNF1 subfamily. In terms of assembly, interacts with CBL1. Interacts with CBL2. Interacts with CBL3. Interacts with CBL9. Interacts with ECT1 and ECT2. Mn(2+) serves as cofactor. In terms of processing, autophosphorylated. Ubiquitous.

It carries out the reaction L-seryl-[protein] + ATP = O-phospho-L-seryl-[protein] + ADP + H(+). The catalysed reaction is L-threonyl-[protein] + ATP = O-phospho-L-threonyl-[protein] + ADP + H(+). CIPK serine-threonine protein kinases interact with CBL proteins. Binding of a CBL protein to the regulatory NAF domain of CIPK protein lead to the activation of the kinase in a calcium-dependent manner. This is CBL-interacting serine/threonine-protein kinase 1 (CIPK1) from Arabidopsis thaliana (Mouse-ear cress).